Reading from the N-terminus, the 263-residue chain is Tryptophan synthase alpha chain (263 aa).

Catalysis depends on proton acceptor residues E47 and D58.

This sequence belongs to the TrpA family. As to quaternary structure, tetramer of two alpha and two beta chains.

It localises to the plastid. The protein localises to the chloroplast. It carries out the reaction (1S,2R)-1-C-(indol-3-yl)glycerol 3-phosphate + L-serine = D-glyceraldehyde 3-phosphate + L-tryptophan + H2O. The protein operates within amino-acid biosynthesis; L-tryptophan biosynthesis; L-tryptophan from chorismate: step 5/5. Functionally, the alpha subunit is responsible for the aldol cleavage of indoleglycerol phosphate to indole and glyceraldehyde 3-phosphate. The polypeptide is Tryptophan synthase alpha chain (Antithamnion sp. (Red alga)).